The sequence spans 318 residues: Porphobilinogen deaminase (318 aa).

At cysteine 241 the chain carries S-(dipyrrolylmethanemethyl)cysteine.

Belongs to the HMBS family. In terms of assembly, monomer. The cofactor is dipyrromethane.

The catalysed reaction is 4 porphobilinogen + H2O = hydroxymethylbilane + 4 NH4(+). It participates in porphyrin-containing compound metabolism; protoporphyrin-IX biosynthesis; coproporphyrinogen-III from 5-aminolevulinate: step 2/4. In terms of biological role, tetrapolymerization of the monopyrrole PBG into the hydroxymethylbilane pre-uroporphyrinogen in several discrete steps. This is Porphobilinogen deaminase from Geotalea daltonii (strain DSM 22248 / JCM 15807 / FRC-32) (Geobacter daltonii).